A 358-amino-acid chain; its full sequence is Molybdenum import ATP-binding protein ModC (358 aa).

In terms of domain architecture, ABC transporter spans N2–E234. G34–T41 lines the ATP pocket. A Mop domain is found at L293–D358.

It belongs to the ABC transporter superfamily. Molybdate importer (TC 3.A.1.8) family. The complex is composed of two ATP-binding proteins (ModC), two transmembrane proteins (ModB) and a solute-binding protein (ModA).

The protein resides in the cell inner membrane. The enzyme catalyses molybdate(out) + ATP + H2O = molybdate(in) + ADP + phosphate + H(+). Its function is as follows. Part of the ABC transporter complex ModABC involved in molybdenum import. Responsible for energy coupling to the transport system. This chain is Molybdenum import ATP-binding protein ModC, found in Hahella chejuensis (strain KCTC 2396).